Here is a 442-residue protein sequence, read N- to C-terminus: Tol-Pal system protein TolB (442 aa).

The N-terminal stretch at 1 to 26 is a signal peptide; the sequence is MRHRSCFSLFAGLALVFCLAVGTAAA.

It belongs to the TolB family. In terms of assembly, the Tol-Pal system is composed of five core proteins: the inner membrane proteins TolA, TolQ and TolR, the periplasmic protein TolB and the outer membrane protein Pal. They form a network linking the inner and outer membranes and the peptidoglycan layer.

It is found in the periplasm. Functionally, part of the Tol-Pal system, which plays a role in outer membrane invagination during cell division and is important for maintaining outer membrane integrity. This Nitratidesulfovibrio vulgaris (strain ATCC 29579 / DSM 644 / CCUG 34227 / NCIMB 8303 / VKM B-1760 / Hildenborough) (Desulfovibrio vulgaris) protein is Tol-Pal system protein TolB.